Consider the following 407-residue polypeptide: DNA-directed RNA polymerase subunit Rpo1C (407 aa).

Belongs to the RNA polymerase beta' chain family. Part of the RNA polymerase complex.

It is found in the cytoplasm. It carries out the reaction RNA(n) + a ribonucleoside 5'-triphosphate = RNA(n+1) + diphosphate. Functionally, DNA-dependent RNA polymerase (RNAP) catalyzes the transcription of DNA into RNA using the four ribonucleoside triphosphates as substrates. Forms part of the jaw domain. This chain is DNA-directed RNA polymerase subunit Rpo1C, found in Aeropyrum pernix (strain ATCC 700893 / DSM 11879 / JCM 9820 / NBRC 100138 / K1).